The sequence spans 236 residues: ATP synthase subunit a, chloroplastic (236 aa).

5 helical membrane-spanning segments follow: residues 25-45 (MHGQVLINSWIVLGLIIAFAV), 87-107 (FIGTLFLFIFVSNWSGALIPW), 123-143 (DINTTVALALLTSLTYFYAGL), 180-202 (LFGNILADELVVAVLVSLVPLVI), and 210-230 (GLFTSGIQALIFATLAGAYIG).

It belongs to the ATPase A chain family. In terms of assembly, F-type ATPases have 2 components, CF(1) - the catalytic core - and CF(0) - the membrane proton channel. CF(1) has five subunits: alpha(3), beta(3), gamma(1), delta(1), epsilon(1). CF(0) has four main subunits: a, b, b' and c.

It localises to the plastid. It is found in the chloroplast thylakoid membrane. Its function is as follows. Key component of the proton channel; it plays a direct role in the translocation of protons across the membrane. The chain is ATP synthase subunit a, chloroplastic from Ostreococcus tauri.